A 295-amino-acid polypeptide reads, in one-letter code: Elongation factor Ts (295 aa).

Positions 79-82 (TDFV) are involved in Mg(2+) ion dislocation from EF-Tu.

It belongs to the EF-Ts family.

It localises to the cytoplasm. Associates with the EF-Tu.GDP complex and induces the exchange of GDP to GTP. It remains bound to the aminoacyl-tRNA.EF-Tu.GTP complex up to the GTP hydrolysis stage on the ribosome. The chain is Elongation factor Ts from Mycoplasma capricolum subsp. capricolum (strain California kid / ATCC 27343 / NCTC 10154).